The chain runs to 134 residues: Putative pre-16S rRNA nuclease (134 aa).

The protein belongs to the YqgF nuclease family.

The protein resides in the cytoplasm. Its function is as follows. Could be a nuclease involved in processing of the 5'-end of pre-16S rRNA. This is Putative pre-16S rRNA nuclease from Helicobacter pylori (strain J99 / ATCC 700824) (Campylobacter pylori J99).